A 338-amino-acid chain; its full sequence is Ribosomal RNA small subunit methyltransferase C (338 aa).

It belongs to the methyltransferase superfamily. RsmC family. Monomer.

The protein resides in the cytoplasm. It catalyses the reaction guanosine(1207) in 16S rRNA + S-adenosyl-L-methionine = N(2)-methylguanosine(1207) in 16S rRNA + S-adenosyl-L-homocysteine + H(+). Functionally, specifically methylates the guanine in position 1207 of 16S rRNA in the 30S particle. The protein is Ribosomal RNA small subunit methyltransferase C of Photorhabdus laumondii subsp. laumondii (strain DSM 15139 / CIP 105565 / TT01) (Photorhabdus luminescens subsp. laumondii).